Consider the following 521-residue polypeptide: GMP synthase [glutamine-hydrolyzing] (521 aa).

The Glutamine amidotransferase type-1 domain maps to 5 to 203 (KILILDFGSQ…VHEICGCGND (199 aa)). Cys82 (nucleophile) is an active-site residue. Catalysis depends on residues His177 and Glu179. Positions 204-396 (WNMPDYISEA…LGLPHDMVYR (193 aa)) constitute a GMPS ATP-PPase domain. 231–237 (SGGVDSS) contributes to the ATP binding site.

In terms of assembly, homodimer.

It carries out the reaction XMP + L-glutamine + ATP + H2O = GMP + L-glutamate + AMP + diphosphate + 2 H(+). It functions in the pathway purine metabolism; GMP biosynthesis; GMP from XMP (L-Gln route): step 1/1. Its function is as follows. Catalyzes the synthesis of GMP from XMP. This chain is GMP synthase [glutamine-hydrolyzing], found in Azoarcus sp. (strain BH72).